A 357-amino-acid polypeptide reads, in one-letter code: RNA 3'-terminal phosphate cyclase (357 aa).

Residues Gln-102 and 293–296 (HMGD) contribute to the ATP site. Residue His-319 is the Tele-AMP-histidine intermediate of the active site.

This sequence belongs to the RNA 3'-terminal cyclase family. Type 1 subfamily.

Its subcellular location is the cytoplasm. The enzyme catalyses a 3'-end 3'-phospho-ribonucleotide-RNA + ATP = a 3'-end 2',3'-cyclophospho-ribonucleotide-RNA + AMP + diphosphate. Its function is as follows. Catalyzes the conversion of 3'-phosphate to a 2',3'-cyclic phosphodiester at the end of RNA. The mechanism of action of the enzyme occurs in 3 steps: (A) adenylation of the enzyme by ATP; (B) transfer of adenylate to an RNA-N3'P to produce RNA-N3'PP5'A; (C) and attack of the adjacent 2'-hydroxyl on the 3'-phosphorus in the diester linkage to produce the cyclic end product. The biological role of this enzyme is unknown but it is likely to function in some aspects of cellular RNA processing. The protein is RNA 3'-terminal phosphate cyclase of Desulfurococcus amylolyticus (strain DSM 18924 / JCM 16383 / VKM B-2413 / 1221n) (Desulfurococcus kamchatkensis).